A 191-amino-acid polypeptide reads, in one-letter code: Peptidyl-tRNA hydrolase (191 aa).

Y17 lines the tRNA pocket. H22 functions as the Proton acceptor in the catalytic mechanism. Residues Y68, N70, and N116 each contribute to the tRNA site.

This sequence belongs to the PTH family. As to quaternary structure, monomer.

Its subcellular location is the cytoplasm. The enzyme catalyses an N-acyl-L-alpha-aminoacyl-tRNA + H2O = an N-acyl-L-amino acid + a tRNA + H(+). In terms of biological role, hydrolyzes ribosome-free peptidyl-tRNAs (with 1 or more amino acids incorporated), which drop off the ribosome during protein synthesis, or as a result of ribosome stalling. Functionally, catalyzes the release of premature peptidyl moieties from peptidyl-tRNA molecules trapped in stalled 50S ribosomal subunits, and thus maintains levels of free tRNAs and 50S ribosomes. The sequence is that of Peptidyl-tRNA hydrolase from Mycobacterium tuberculosis (strain ATCC 25177 / H37Ra).